The chain runs to 310 residues: p-hydroxybenzoic acid efflux pump subunit AaeA (310 aa).

The helical transmembrane segment at 12–32 threads the bilayer; that stretch reads VITLLLVIIAIVLIFRIWVFY.

The protein belongs to the membrane fusion protein (MFP) (TC 8.A.1) family.

Its subcellular location is the cell inner membrane. In terms of biological role, forms an efflux pump with AaeB. In Erwinia tasmaniensis (strain DSM 17950 / CFBP 7177 / CIP 109463 / NCPPB 4357 / Et1/99), this protein is p-hydroxybenzoic acid efflux pump subunit AaeA.